A 183-amino-acid polypeptide reads, in one-letter code: Large ribosomal subunit protein mL43 (183 aa).

Disordered regions lie at residues 120 to 144 and 162 to 183; these read HTDNPSIQGQWTPSPTNGLPSTGCG and PGALDRERDRIGSSFGFQAQAE. Polar residues predominate over residues 122-139; the sequence is DNPSIQGQWTPSPTNGLP. A compositionally biased stretch (basic and acidic residues) spans 162 to 172; that stretch reads PGALDRERDRI.

It belongs to the mitochondrion-specific ribosomal protein mL43 family. In terms of assembly, component of the mitochondrial ribosome large subunit (39S) which comprises a 16S rRNA and about 50 distinct proteins. In terms of tissue distribution, ubiquitous with the highest levels in the liver, heart and kidneys. The skeletal muscle, brain and testis showed lower but detectable expression. Expression is coregulated with TWNK.

It localises to the mitochondrion. The chain is Large ribosomal subunit protein mL43 (Mrpl43) from Mus musculus (Mouse).